The chain runs to 63 residues: Probable rubredoxin (63 aa).

Residues 11–62 (MKRYKCRVCGYIYDPEKGEPRTDTPPGTPFEDLPETWRCPSCGAKKKMFKPL) enclose the Rubredoxin-like domain. C16, C19, C49, and C52 together coordinate Fe cation.

This sequence belongs to the rubredoxin family. Requires Fe(3+) as cofactor.

In terms of biological role, rubredoxin is a small nonheme, iron protein lacking acid-labile sulfide. Its single Fe, chelated to 4 Cys, functions as an electron acceptor and may also stabilize the conformation of the molecule. This is Probable rubredoxin from Methanothermobacter thermautotrophicus (strain ATCC 29096 / DSM 1053 / JCM 10044 / NBRC 100330 / Delta H) (Methanobacterium thermoautotrophicum).